The chain runs to 103 residues: MAKESIIFVGLFTAILSAAILLVSCAGNDQSLSQYVKIKVQDGDTLWSLADHVAEKKHINKEDFIEWVTENNHLQTADIKPGDELILPVKKKHPAVYQLAIVN.

Positions Val36 to Leu87 constitute a LysM domain.

This sequence belongs to the YneA family.

It localises to the cytoplasm. In terms of biological role, inhibits cell division during the SOS response. Affects a later stage of the cell division protein assembly, after the assembly of the Z ring, by probably suppressing recruitment of FtsL and/or DivIC to the division machinery. The polypeptide is Cell division suppressor protein YneA (Bacillus velezensis (strain DSM 23117 / BGSC 10A6 / LMG 26770 / FZB42) (Bacillus amyloliquefaciens subsp. plantarum)).